The sequence spans 395 residues: Acetate kinase (395 aa).

N7 is a Mg(2+) binding site. K14 contributes to the ATP binding site. R85 lines the substrate pocket. D142 (proton donor/acceptor) is an active-site residue. ATP-binding positions include 202–206, 277–279, and 325–329; these read HLGNG, DMR, and GIGEN. E378 contributes to the Mg(2+) binding site.

This sequence belongs to the acetokinase family. In terms of assembly, homodimer. Mg(2+) is required as a cofactor. The cofactor is Mn(2+).

Its subcellular location is the cytoplasm. It carries out the reaction acetate + ATP = acetyl phosphate + ADP. Its pathway is metabolic intermediate biosynthesis; acetyl-CoA biosynthesis; acetyl-CoA from acetate: step 1/2. Catalyzes the formation of acetyl phosphate from acetate and ATP. Can also catalyze the reverse reaction. This is Acetate kinase from Deinococcus geothermalis (strain DSM 11300 / CIP 105573 / AG-3a).